A 655-amino-acid chain; its full sequence is Phosphatidylinositol-3,5-bisphosphate 3-phosphatase MTMR6 (655 aa).

Positions methionine 1–glutamine 101 constitute a GRAM domain. The segment at glutamate 2–asparagine 141 is interaction with RAB1B. Tyrosine 108 carries the phosphotyrosine modification. One can recognise a Myotubularin phosphatase domain in the interval glycine 124 to tyrosine 537. Positions 286, 311, and 312 each coordinate a 1,2-diacyl-sn-glycero-3-phospho-(1D-myo-inositol-3,5-bisphosphate). A 1,2-diacyl-sn-glycero-3-phospho-(1D-myo-inositol-3-phosphate) is bound by residues asparagine 286, asparagine 311, and isoleucine 312. Cysteine 374 functions as the Phosphocysteine intermediate in the catalytic mechanism. Residues serine 375, aspartate 376, glycine 377, tryptophan 378, aspartate 379, arginine 380, lysine 416, and arginine 420 each contribute to the a 1,2-diacyl-sn-glycero-3-phospho-(1D-myo-inositol-3,5-bisphosphate) site. Residues serine 375, aspartate 376, glycine 377, tryptophan 378, aspartate 379, and arginine 380 each contribute to the a 1,2-diacyl-sn-glycero-3-phospho-(1D-myo-inositol-3-phosphate) site. Residue arginine 420 participates in a 1,2-diacyl-sn-glycero-3-phospho-(1D-myo-inositol-3-phosphate) binding. Positions arginine 547–glycine 581 form a coiled coil. Phosphoserine occurs at positions 595, 623, and 645.

It belongs to the protein-tyrosine phosphatase family. Non-receptor class myotubularin subfamily. In terms of assembly, homodimer. Heterodimer (via C-terminus) with MTMR9 (via C-terminus). Interacts with ALKBH4. Interacts with KCNN4. Interacts (via GRAM domain) with RAB1B (in GDP-bound form); the interaction regulates MTMR6 recruitment to the endoplasmic reticulum-Golgi intermediate compartment.

The protein resides in the cytoplasm. It is found in the endoplasmic reticulum. The protein localises to the cell projection. It localises to the ruffle membrane. Its subcellular location is the endoplasmic reticulum-Golgi intermediate compartment. The protein resides in the perinuclear region. The enzyme catalyses a 1,2-diacyl-sn-glycero-3-phospho-(1D-myo-inositol-3,5-bisphosphate) + H2O = a 1,2-diacyl-sn-glycero-3-phospho-(1D-myo-inositol-5-phosphate) + phosphate. It catalyses the reaction a 1,2-diacyl-sn-glycero-3-phospho-(1D-myo-inositol-3-phosphate) + H2O = a 1,2-diacyl-sn-glycero-3-phospho-(1D-myo-inositol) + phosphate. It carries out the reaction 1,2-dioctanoyl-sn-glycero-3-phospho-(1D-myo-inositol-3,5-bisphosphate) + H2O = 1,2-dioctanoyl-sn-glycero-3-phospho-(1D-myo-inositol-5-phosphate) + phosphate. The catalysed reaction is 1,2-dioctanoyl-sn-glycero-3-phospho-(1-D-myo-inositol-3-phosphate) + H2O = 1,2-dioctanoyl-sn-glycero-3-phospho-(1D-myo-inositol) + phosphate. Allosterically activated by phosphatidylserine and/or phosphatidylinositol 4-phosphate (PtdIns(4)P), and phosphatidylinositol 5-phosphate (PtdIns(5)P). Interaction with MTMR9 increases catalytic activity towards phosphatidylinositol 3,5-bisphosphate. In terms of biological role, lipid phosphatase that specifically dephosphorylates the D-3 position of phosphatidylinositol 3-phosphate and phosphatidylinositol 3,5-bisphosphate, generating phosphatidylinositol and phosphatidylinositol 5-phosphate. Binds with high affinity to phosphatidylinositol 3,5-bisphosphate (PtdIns(3,5)P2) but also to phosphatidylinositol 3-phosphate (PtdIns(3)P), phosphatidylinositol 4-phosphate (PtdIns(4)P), and phosphatidylinositol 5-phosphate (PtdIns(5)P), phosphatidic acid and phosphatidylserine. Negatively regulates ER-Golgi protein transport. Probably in association with MTMR9, plays a role in the late stages of macropinocytosis by dephosphorylating phosphatidylinositol 3-phosphate in membrane ruffles. Acts as a negative regulator of KCNN4/KCa3.1 channel activity in CD4(+) T-cells possibly by decreasing intracellular levels of phosphatidylinositol 3-phosphate. Negatively regulates proliferation of reactivated CD4(+) T-cells. In complex with MTMR9, negatively regulates DNA damage-induced apoptosis. The formation of the MTMR6-MTMR9 complex stabilizes both MTMR6 and MTMR9 protein levels. The protein is Phosphatidylinositol-3,5-bisphosphate 3-phosphatase MTMR6 of Rattus norvegicus (Rat).